We begin with the raw amino-acid sequence, 445 residues long: Cytochrome P450 monooxygenase penB (445 aa).

Residue Cys381 coordinates heme.

It belongs to the cytochrome P450 family. It depends on heme as a cofactor.

It participates in secondary metabolite biosynthesis. The protein operates within alkaloid biosynthesis. Its pathway is mycotoxin biosynthesis. Functionally, cytochrome P450 monooxygenase; part of the gene cluster that mediates the biosynthesis of penigequinolones, potent insecticidal alkaloids that contain a highly modified 10-carbon prenyl group. The first stage is catalyzed by the nonribosomal peptide synthetase penN that condenses anthranilic acid and O-methyl-L-tyrosine to produce 4'-methoxycyclopeptin. 4'-methoxycyclopeptin is then converted to 4'-methoxydehydrocyclopeptin by the ketoglutarate-dependent dioxygenase penM through dehydrogenation to form a double bond between C-alpha and C-beta of the O-methyltyrosine side chain. PenM also converts its first product methoxydehydrocyclopeptin to 4'-methoxycyclopenin. The following conversion of 4'methoxycyclopenin into 4'-methoxyviridicatin is catalyzed by the cyclopenase penL. 4'-methoxyviridicatin is the precursor of quinolone natural products, and is further converted to quinolinone B. The prenyltransferase penI then catalyzes the canonical Friedel-Crafts alkylation of quinolinone B with dimethylallyl cation to yield dimethylallyl quinolone, which is subjected to FAD-dependent dehydrogenation by the FAD-linked oxidoreductase penH to yield conjugated aryl diene. The delta(3') double bond then serves as the site of the second alkylation with DMAPP catalyzed by the prenyltransferase penG to yield a carbenium ion intermediate, which can be attacked by H(2)O to yield a styrenyl quinolone containing a C3'-hydroxyprenyl chain, or undergo cyclization to yield yaequinolones J1 and J2. The conversion of the styrenyl quinolone into the tetrahydrofuran-containing yaequinolone C is performed by the FAD-dependent monooxygenase penE and involves epoxidation of the terminal C7'-C8' olefin, followed by epoxide ring opening initiated by the C3' hydroxyl group. The predicted cysteine hydrolase penJ acts as an epoxide hydrolase that enhances the rate of the 5-exo-tet cyclization step, increasing the yield of yaequinolone C. PenF catalyzes the cationic rearrangement of the epoxide formed by penE (before ring opening to produce yaequinolone C) into yaequinolone D. Finally, the short-chain dehydrogenase/reductase (SDR)-like reductase penD, catalyzes both the dehydration of yaequinolone D and the reduction of the resulting oxonium to yield penigequinolone. The polypeptide is Cytochrome P450 monooxygenase penB (Penicillium thymicola).